Here is a 157-residue protein sequence, read N- to C-terminus: Alanyl-tRNA editing protein AlaX-S (157 aa).

Zn(2+) contacts are provided by His-9, His-13, Cys-116, and His-120.

This sequence belongs to the class-II aminoacyl-tRNA synthetase family. Editing domain AlaX-S subfamily. In terms of assembly, monomer and homodimer; the dimer is less active in tRNA editing and does not have a zinc ion associated with it. Another report shows only a monomeric form. The cofactor is Zn(2+).

The protein localises to the cytoplasm. Functions in trans to edit the amino acid moiety from mischarged charged Ser-tRNA(Ala). Has little activity against Gly-tRNA(Ala). This is Alanyl-tRNA editing protein AlaX-S (alaXS) from Pyrococcus horikoshii (strain ATCC 700860 / DSM 12428 / JCM 9974 / NBRC 100139 / OT-3).